Reading from the N-terminus, the 354-residue chain is Opsin-5 (354 aa).

The Extracellular segment spans residues 1-33 (MALNHTALPQDERLPHYLRDGDPFASKLSWEAD). Asn4 carries N-linked (GlcNAc...) asparagine glycosylation. A helical membrane pass occupies residues 34-54 (LVAGFYLTIIGILSTFGNGYV). Residues 55–74 (LYMSSRRKKKLRPAEIMTIN) lie on the Cytoplasmic side of the membrane. The helical transmembrane segment at 75-95 (LAVCDLGISVVGKPFTIISCF) threads the bilayer. At 96-108 (CHRWVFGWIGCRW) the chain is on the extracellular side. Residues Cys106 and Cys183 are joined by a disulfide bond. Residues 109 to 129 (YGWAGFFFGCGSLITMTAVSL) form a helical membrane-spanning segment. The Cytoplasmic portion of the chain corresponds to 130 to 150 (DRYLKICYLSYGVWLKRKHAY). Residues 151–171 (ICLAAIWAYASFWTTMPLVGL) form a helical membrane-spanning segment. The Extracellular portion of the chain corresponds to 172 to 197 (GDYVPEPFGTSCTLDWWLAQASVGGQ). The helical transmembrane segment at 198-218 (VFILNILFFCLLLPTAVIVFS) threads the bilayer. Over 219–252 (YVKIIAKVKSSSKEVAHFDSRIHSSHVLEMKLTK) the chain is Cytoplasmic. A helical transmembrane segment spans residues 253–273 (VAMLICAGFLIAWIPYAVVSV). The Extracellular segment spans residues 274 to 288 (WSAFGRPDSIPIQLS). The helical transmembrane segment at 289 to 309 (VVPTLLAKSAAMYNPIIYQVI) threads the bilayer. The residue at position 296 (Lys296) is an N6-(retinylidene)lysine. Topologically, residues 310 to 353 (DYKFACCQTGGLKATKKKSLEGFRLHTVTTVRKSSAVLEIHEEW) are cytoplasmic. S-palmitoyl cysteine attachment occurs at residues Cys315 and Cys316.

It belongs to the G-protein coupled receptor 1 family. Opsin subfamily. It is uncertain whether Cys-315 or Cys-316 is palmitoylated. As to expression, detected in brain and retina and cell lines derived from neural retina.

It localises to the cell membrane. In terms of biological role, G-protein coupled receptor which selectively activates G(i) type G proteins via ultraviolet A (UVA) light-mediated activation in the retina. Preferentially binds the chromophore 11-cis retinal and is a bistable protein that displays emission peaks at 380 nm (UVA light) and 470 nm (blue light). Required for the light-response in the inner plexiform layer, and contributes to the regulation of the light-response in the nerve fiber layer, via phosphorylated DAT/SLC6A3 dopamine uptake. Involved in local corneal and retinal circadian rhythm photoentrainment via modulation of the UVA light-induced phase-shift of the retina clock. Acts as a circadian photoreceptor in the outer ear, via modulation of circadian clock-gene expression in response to violet light during the light-to-dark transition phase and night phase of the circadian cycle. Required in the retina to negatively regulate hyaloid vessel regression during postnatal development via light-dependent OPN5-SLC32A1-DRD2-VEGFR2 signaling. Involved in the light-dependent regulation of retina and vitreous compartment dopamine levels. In Homo sapiens (Human), this protein is Opsin-5 (OPN5).